We begin with the raw amino-acid sequence, 518 residues long: Ribonuclease Y (518 aa).

Residues 2 to 22 (GSIIISALLALVIGAVVGFFV) traverse the membrane as a helical segment. In terms of domain architecture, KH spans 208-271 (TVSVVNLPND…ETARIALDKL (64 aa)). The region spanning 334 to 427 (VLKHSVEVAF…VAAADALSAA (94 aa)) is the HD domain.

Belongs to the RNase Y family.

It is found in the cell membrane. Its function is as follows. Endoribonuclease that initiates mRNA decay. The chain is Ribonuclease Y from Geobacillus thermodenitrificans (strain NG80-2).